A 255-amino-acid chain; its full sequence is 2-(S)-hydroxypropyl-CoM dehydrogenase 3 (255 aa).

Residues Ile19, Asp38, 64 to 65, and Asn91 contribute to the NAD(+) site; that span reads DV. (S)-2-hydroxypropyl-coenzyme M contacts are provided by Ser143 and Tyr156. The Proton acceptor role is filled by Tyr156. Lys160 is an NAD(+) binding site. Thr188 is a (S)-2-hydroxypropyl-coenzyme M binding site. 189–193 serves as a coordination point for NAD(+); that stretch reads VTSTG. Tyr215 serves as a coordination point for (S)-2-hydroxypropyl-coenzyme M.

Belongs to the short-chain dehydrogenases/reductases (SDR) family. In terms of assembly, homotetramer.

It carries out the reaction (S)-2-hydroxypropyl-coenzyme M + NAD(+) = 2-oxopropyl-coenzyme M + NADH + H(+). With respect to regulation, not inhibited by 2-(2-methyl-2-hydroxypropylthio)ethanesulfonate (M-HPC), an achiral analog of both R-HPC and S-HPC. Functionally, involved in aliphatic epoxide carboxylation. Catalyzes the reversible oxidation of (2S)-2-hydroxypropyl-coenzyme M (S-HPC) to 2-oxopropyl-coenzyme M (2-KPC). The enzyme is highly specific for the S enantiomers. In vitro can also use the aliphatic ketone 2-butanone and the aliphatic alcohol 2-propanol, and shows an inherent stereoselectivity for 2-butanone reduction. This is 2-(S)-hydroxypropyl-CoM dehydrogenase 3 from Xanthobacter autotrophicus (strain ATCC BAA-1158 / Py2).